The primary structure comprises 373 residues: tRNA (guanine(26)-N(2))-dimethyltransferase (373 aa).

Residues 2-365 enclose the Trm1 methyltransferase domain; the sequence is KIISEGETKL…AELSDLVVLI (364 aa). Residues Arg35, Arg66, Asp86, Asp113, and Ala114 each coordinate S-adenosyl-L-methionine.

This sequence belongs to the class I-like SAM-binding methyltransferase superfamily. Trm1 family.

It catalyses the reaction guanosine(26) in tRNA + 2 S-adenosyl-L-methionine = N(2)-dimethylguanosine(26) in tRNA + 2 S-adenosyl-L-homocysteine + 2 H(+). Dimethylates a single guanine residue at position 26 of a number of tRNAs using S-adenosyl-L-methionine as donor of the methyl groups. This Methanococcus maripaludis (strain C6 / ATCC BAA-1332) protein is tRNA (guanine(26)-N(2))-dimethyltransferase.